The primary structure comprises 57 residues: uncharacterized protein (57 aa).

Residues 4-26 (FMPIRVFLYSYVIINSLLSSFFH) traverse the membrane as a helical segment.

Its subcellular location is the membrane. This is an uncharacterized protein from Saccharomyces cerevisiae (strain ATCC 204508 / S288c) (Baker's yeast).